Consider the following 155-residue polypeptide: Ribosomal RNA large subunit methyltransferase H (155 aa).

Residues Leu-72, Gly-103, and 122–127 (FGRMVW) each bind S-adenosyl-L-methionine.

Belongs to the RNA methyltransferase RlmH family. In terms of assembly, homodimer.

The protein localises to the cytoplasm. It carries out the reaction pseudouridine(1915) in 23S rRNA + S-adenosyl-L-methionine = N(3)-methylpseudouridine(1915) in 23S rRNA + S-adenosyl-L-homocysteine + H(+). Functionally, specifically methylates the pseudouridine at position 1915 (m3Psi1915) in 23S rRNA. This is Ribosomal RNA large subunit methyltransferase H from Cereibacter sphaeroides (strain ATCC 17023 / DSM 158 / JCM 6121 / CCUG 31486 / LMG 2827 / NBRC 12203 / NCIMB 8253 / ATH 2.4.1.) (Rhodobacter sphaeroides).